The primary structure comprises 865 residues: MERAGPNSVRSQQQRDPDWVEAWLDDHRDFTFSYFIRKATRDMVNAWFSERVHNIPVCKEGIRAHTESCSCSLQQSPHADNTTPGAPARKISASEFDRPLRPIVVKDSEGTVSFLSDSGKKEQMPLTPPRFDSDEGDQCSRLLELVKDISSHLDVTALCHKIFLHIHGLISADRYSLFLVCEDSSKDKFLISRLFDVAEGSTLEEASNNCIRLEWNKGIVGHVAAFGEPLNIKDAYEDPRFNAEVDQITGYKTQSILCMPIKNHREEVVGVAQAINKKSGNGGTFTEKDEKDFAAYLAFCGIVLHNAQLYETSLLENKRNQVLLDLASLIFEEQQSLEVILKKIAATIISFMQVQKCTIFIVDEDCPDSFSRVFHMECEEVGKPSDPLTREQDANKINYMYAQYVKNTMEPLNIPDVTKDKRFPWTNENMGHVNTPCIGSLLCTPIKNGKKNKVIGVCQLVNKMEENTGKIKAFNQNDEQFLEAFVIFCGLGIQNTQMYEAVERAMAKQMVTLEVLSYHASAAEEETRELQALSAAVVPSAQTLKITDFSFSDFELSDLETALCTIRMFTDLNLVQNFQMKHEVLCRWILSVKKNYRKNVAYHNWRHAFNTAQCMFAALKAGKIQNKLTDLETLALLIAALSHDLDHRGVNNSYIQRSEHPLAQLYCHSIMEHHHFDQCLMILNSPGNQILSGLSIDEYKTTLKIIKQAILATDLALYIKRRGEFFELIRKNQFSFEDPLQKELFLAMLMTACDLSAITKPWPIQQRIAELVAAEFFDQGDRERKELNMEPADLMNREKKNKIPSMQVGFIDAICLQLYEALTHVSEDCLPLLDGCRKNRQKWQALAEQQEKMLLNGESSQGKRD.

Ser-92 bears the Phosphoserine mark. GAF domains are found at residues 154–304 and 336–493; these read DVTA…GIVL and SLEV…GLGI. Residues 526-850 form the PDEase domain; sequence ETRELQALSA…QKWQALAEQQ (325 aa). Residue His-603 is the Proton donor of the active site. Zn(2+)-binding residues include His-607, His-643, Asp-644, and Asp-754. Asp-644 provides a ligand contact to Mg(2+). A 3',5'-cyclic GMP-binding site is contributed by Gln-807.

The protein belongs to the cyclic nucleotide phosphodiesterase family. The cofactor is Zn(2+). It depends on Mg(2+) as a cofactor. In terms of processing, phosphorylation is regulated by binding of cGMP to the two allosteric sites. Phosphorylation by PRKG1 leads to its activation.

It catalyses the reaction 3',5'-cyclic GMP + H2O = GMP + H(+). It functions in the pathway purine metabolism; 3',5'-cyclic GMP degradation; GMP from 3',5'-cyclic GMP: step 1/1. Plays a role in signal transduction by regulating the intracellular concentration of cyclic nucleotides. This phosphodiesterase catalyzes the specific hydrolysis of cGMP to 5'-GMP. Specifically regulates nitric-oxide-generated cGMP. The protein is cGMP-specific 3',5'-cyclic phosphodiesterase (Pde5a) of Mus musculus (Mouse).